We begin with the raw amino-acid sequence, 353 residues long: MAVVTMRQLLESGVHFGHQTRRWNPKMKRFIFTERNGIYIIDLQQSLTDIDRAFSFVKDTVAHGGSILFVGTKKQAQEAVAEQASRVGMPYVNQRWLGGMLTNFQTVSKRLSRLKELEEIDFDDVAASGRTKKELLMMRREKDKLERTLGGIREMAKVPSAVWIVDTKKEHLAVAEARKLNIPVVAILDTNCDPDEVDYPIPGNDDAIRAVGLLTRVIADAVAEGTVARHGGSAPGEAGTAEEPLAEWERELLQGDTDEQSSAANTEEPTPAEAEALEAPADTPAEPLAAEADGETVAEAPAEVETAAEAPAEAEAEVEAESATPAEAEVEAESATPAEAEAETPAESTDEQA.

The interval 256–353 (DTDEQSSAAN…TPAESTDEQA (98 aa)) is disordered. Low complexity-rich tracts occupy residues 263–311 (AANT…AEAP) and 321–339 (ESAT…TPAE). The segment covering 340–353 (AEAETPAESTDEQA) has biased composition (acidic residues).

This sequence belongs to the universal ribosomal protein uS2 family.

In Beutenbergia cavernae (strain ATCC BAA-8 / DSM 12333 / CCUG 43141 / JCM 11478 / NBRC 16432 / NCIMB 13614 / HKI 0122), this protein is Small ribosomal subunit protein uS2.